The chain runs to 252 residues: Nuclease C1 (252 aa).

His87 acts as the Proton acceptor in catalysis. Residue Asn119 participates in Mg(2+) binding.

The protein belongs to the DNA/RNA non-specific endonuclease family. Mg(2+) is required as a cofactor. Requires Mn(2+) as cofactor.

The protein localises to the secreted. Functionally, this enzyme has both RNase and DNase activity. This chain is Nuclease C1 (NUC1CE), found in Cunninghamella echinulata var. echinulata.